A 206-amino-acid chain; its full sequence is Cell division protein SepF (206 aa).

Residues 31-53 show a composition bias toward basic and acidic residues; the sequence is EEKERRKTERQEQRQAVKQEKRT. Positions 31–81 are disordered; sequence EEKERRKTERQEQRQAVKQEKRTFPSQRPAFSEEAPTSSSSKLSAASGSSD. Low complexity predominate over residues 60 to 80; it reads AFSEEAPTSSSSKLSAASGSS.

This sequence belongs to the SepF family. Homodimer. Interacts with FtsZ.

It is found in the cytoplasm. Functionally, cell division protein that is part of the divisome complex and is recruited early to the Z-ring. Probably stimulates Z-ring formation, perhaps through the cross-linking of FtsZ protofilaments. Its function overlaps with FtsA. In Lachnoclostridium phytofermentans (strain ATCC 700394 / DSM 18823 / ISDg) (Clostridium phytofermentans), this protein is Cell division protein SepF.